Consider the following 123-residue polypeptide: Galanin peptides (123 aa).

Positions 1 to 19 are cleaved as a signal peptide; the sequence is MPRGSVLLLASLLLAAALS. Residues 20 to 30 constitute a propeptide that is removed on maturation; that stretch reads ATLGLGSPVKE. Residues 53-66 show a composition bias toward basic and acidic residues; the sequence is SFQDKHGLAGKREL. A disordered region spans residues 53 to 79; that stretch reads SFQDKHGLAGKRELEPEDEARPGSFDR. The residue at position 61 (alanine 61) is an Alanine amide. Serine 116 bears the Phosphoserine mark.

It belongs to the galanin family.

The protein localises to the secreted. Endocrine hormone of the central and peripheral nervous systems that binds and activates the G protein-coupled receptors GALR1, GALR2, and GALR3. This small neuropeptide may regulate diverse physiologic functions including contraction of smooth muscle of the gastrointestinal and genitourinary tract, growth hormone and insulin release and adrenal secretion. This Bos taurus (Bovine) protein is Galanin peptides (GAL).